The chain runs to 339 residues: Phenylalanine--tRNA ligase alpha subunit (339 aa).

A Mg(2+)-binding site is contributed by E254.

Belongs to the class-II aminoacyl-tRNA synthetase family. Phe-tRNA synthetase alpha subunit type 1 subfamily. In terms of assembly, tetramer of two alpha and two beta subunits. It depends on Mg(2+) as a cofactor.

It is found in the cytoplasm. The enzyme catalyses tRNA(Phe) + L-phenylalanine + ATP = L-phenylalanyl-tRNA(Phe) + AMP + diphosphate + H(+). This Clostridium tetani (strain Massachusetts / E88) protein is Phenylalanine--tRNA ligase alpha subunit.